Consider the following 386-residue polypeptide: L-lactate oxidase (386 aa).

The region spanning 16-382 (AQAPFPICFA…RTITLVKNDG (367 aa)) is the FMN hydroxy acid dehydrogenase domain. A pyruvate-binding site is contributed by Y42. Residues 95 to 97 (PVG), S124, and Q146 contribute to the FMN site. Residue Y148 coordinates pyruvate. T174 is a binding site for FMN. R183 contacts pyruvate. Residues K253 and S275 each coordinate FMN. Pyruvate contacts are provided by H277 and R280. H277 (proton acceptor) is an active-site residue. FMN is bound by residues 308–312 (DSGVY) and R332.

It belongs to the FMN-dependent alpha-hydroxy acid dehydrogenase family. In terms of assembly, homotetramer. The cofactor is FMN.

It carries out the reaction a (2S)-2-hydroxycarboxylate + O2 = a 2-oxocarboxylate + H2O2. The catalysed reaction is (S)-lactate + O2 = pyruvate + H2O2. It catalyses the reaction 2-hydroxyoctanoate + O2 = 2-oxooctanoate + H2O2. The enzyme catalyses mandelate + O2 = phenylglyoxylate + H2O2. It carries out the reaction 2-hydroxyoctadecanoate + O2 = 2-oxooctadecanoate + H2O2. The catalysed reaction is (S)-2-hydroxyglutarate + O2 = H2O2 + 2-oxoglutarate. Its function is as follows. Oxidase that catalyzes the oxidation of a broad range of 2-hydroxyacids in vitro, such as (S)-lactate, 2-hydroxyoctanoate, mandelate, 2-hydroxyoctadecanoate and (S)-2-hydroxyglutarate, to the corresponding 2-oxoacids, with a reduction of O2 to H2O2. May be involved in the utilization of L-lactate as an energy source for growth. The sequence is that of L-lactate oxidase from Lysinibacillus sphaericus (strain C3-41).